A 117-amino-acid polypeptide reads, in one-letter code: MKIRCGTDILRVSRIKNIKNLDKFMKKVFTEREISYIESKNRSFETITGMFCMKEAVSKALKTGIGKMSFMDVESIHDDGLVVKLNTDKFPKVLDIDASISHDGEYAVAMCVLMLED.

2 residues coordinate Mg(2+): aspartate 8 and glutamate 55.

This sequence belongs to the P-Pant transferase superfamily. AcpS family. Mg(2+) is required as a cofactor.

The protein localises to the cytoplasm. It catalyses the reaction apo-[ACP] + CoA = holo-[ACP] + adenosine 3',5'-bisphosphate + H(+). Its function is as follows. Transfers the 4'-phosphopantetheine moiety from coenzyme A to a Ser of acyl-carrier-protein. This Finegoldia magna (strain ATCC 29328 / DSM 20472 / WAL 2508) (Peptostreptococcus magnus) protein is Holo-[acyl-carrier-protein] synthase.